Here is a 220-residue protein sequence, read N- to C-terminus: Guanylate kinase (220 aa).

In terms of domain architecture, Guanylate kinase-like spans 15–194 (GLMLVISSPS…ALDAVQSIVK (180 aa)). 22–29 (SPSGAGKS) lines the ATP pocket.

This sequence belongs to the guanylate kinase family.

Its subcellular location is the cytoplasm. It catalyses the reaction GMP + ATP = GDP + ADP. In terms of biological role, essential for recycling GMP and indirectly, cGMP. This is Guanylate kinase from Rhizobium johnstonii (strain DSM 114642 / LMG 32736 / 3841) (Rhizobium leguminosarum bv. viciae).